Reading from the N-terminus, the 246-residue chain is Adenosine 5'-phosphosulfate reductase (246 aa).

[4Fe-4S] cluster is bound by residues Cys131, Cys132, Cys214, and Cys217. The active-site Nucleophile; cysteine thiosulfonate intermediate is Cys242.

The protein belongs to the PAPS reductase family. CysH subfamily. [4Fe-4S] cluster is required as a cofactor.

It localises to the cytoplasm. It catalyses the reaction [thioredoxin]-disulfide + sulfite + AMP + 2 H(+) = adenosine 5'-phosphosulfate + [thioredoxin]-dithiol. The protein operates within sulfur metabolism; hydrogen sulfide biosynthesis; sulfite from sulfate. Catalyzes the formation of sulfite from adenosine 5'-phosphosulfate (APS) using thioredoxin as an electron donor. This chain is Adenosine 5'-phosphosulfate reductase, found in Neisseria meningitidis serogroup B (strain ATCC BAA-335 / MC58).